The chain runs to 142 residues: Calmodulin-alpha (142 aa).

At Ala2 the chain carries N-acetylalanine. 4 EF-hand domains span residues 8-43, 44-79, 81-116, and 117-142; these read EQIA…LGQN, PTEA…KMKD, DSEE…LGEK, and LTDE…YEEF. Asp21, Asp23, Asp25, Thr27, Glu32, Asp57, Asp59, Asn61, Thr63, Glu68, Asp94, Asp96, Asn98, Tyr100, and Glu105 together coordinate Ca(2+). Lys116 carries the post-translational modification N6,N6,N6-trimethyllysine. Ca(2+)-binding residues include Asp130, Asp132, Asp134, Gln136, and Glu141.

The protein belongs to the calmodulin family.

Functionally, calmodulin mediates the control of a large number of enzymes, ion channels and other proteins by Ca(2+). Among the enzymes to be stimulated by the calmodulin-Ca(2+) complex are a number of protein kinases and phosphatases. In Arbacia punctulata (Punctuate sea urchin), this protein is Calmodulin-alpha.